The sequence spans 352 residues: Probable dual-specificity RNA methyltransferase RlmN (352 aa).

Glu-99 (proton acceptor) is an active-site residue. A Radical SAM core domain is found at 105–325; it reads EGDRATLCIS…ESHGYTCTIR (221 aa). Cys-112 and Cys-336 are joined by a disulfide. [4Fe-4S] cluster is bound by residues Cys-119, Cys-123, and Cys-126. S-adenosyl-L-methionine is bound by residues 164–165, Ser-196, 217–219, and His-293; these read GE and SLH. Cys-336 serves as the catalytic S-methylcysteine intermediate.

This sequence belongs to the radical SAM superfamily. RlmN family. The cofactor is [4Fe-4S] cluster.

The protein resides in the cytoplasm. The enzyme catalyses adenosine(2503) in 23S rRNA + 2 reduced [2Fe-2S]-[ferredoxin] + 2 S-adenosyl-L-methionine = 2-methyladenosine(2503) in 23S rRNA + 5'-deoxyadenosine + L-methionine + 2 oxidized [2Fe-2S]-[ferredoxin] + S-adenosyl-L-homocysteine. It carries out the reaction adenosine(37) in tRNA + 2 reduced [2Fe-2S]-[ferredoxin] + 2 S-adenosyl-L-methionine = 2-methyladenosine(37) in tRNA + 5'-deoxyadenosine + L-methionine + 2 oxidized [2Fe-2S]-[ferredoxin] + S-adenosyl-L-homocysteine. Specifically methylates position 2 of adenine 2503 in 23S rRNA and position 2 of adenine 37 in tRNAs. This is Probable dual-specificity RNA methyltransferase RlmN from Porphyromonas gingivalis (strain ATCC 33277 / DSM 20709 / CIP 103683 / JCM 12257 / NCTC 11834 / 2561).